A 488-amino-acid polypeptide reads, in one-letter code: Dipeptide and tripeptide permease B (488 aa).

At Met1–Arg27 the chain is on the cytoplasmic side. A helical transmembrane segment spans residues Phe28 to Ser48. At Glu49 to Ser52 the chain is on the periplasmic side. Residues Phe53–Val73 form a helical membrane-spanning segment. Residues Gly74–Arg82 are Cytoplasmic-facing. The helical transmembrane segment at Thr83–Met103 threads the bilayer. The Periplasmic segment spans residues Lys104 to Glu106. The helical transmembrane segment at Leu107–Ala127 threads the bilayer. At Ser128–Thr146 the chain is on the cytoplasmic side. A helical membrane pass occupies residues Leu147 to Ala167. At Glu168 to Tyr172 the chain is on the periplasmic side. The chain crosses the membrane as a helical span at residues Thr173–Cys193. The Cytoplasmic segment spans residues Arg194–Pro211. Residues Ile212–Leu232 form a helical membrane-spanning segment. At His233 to Asn234 the chain is on the periplasmic side. The helical transmembrane segment at Ile235–Trp255 threads the bilayer. Topologically, residues Gln256–Lys267 are cytoplasmic. Residues Met268 to Met288 traverse the membrane as a helical segment. Residues Pro289–Pro311 are Periplasmic-facing. The chain crosses the membrane as a helical span at residues Val312–Val332. The Cytoplasmic portion of the chain corresponds to Tyr333–Lys348. The helical transmembrane segment at Phe349–Phe369 threads the bilayer. Topologically, residues Ala370–Pro378 are periplasmic. Residues Trp379–Gly399 form a helical membrane-spanning segment. The Cytoplasmic portion of the chain corresponds to Leu400–Gln423. A helical membrane pass occupies residues Ala424 to Thr444. The Periplasmic portion of the chain corresponds to Asp445–Ser455. A helical membrane pass occupies residues Val456–Pro476. The Cytoplasmic portion of the chain corresponds to Trp477 to Ala488.

It belongs to the major facilitator superfamily. Proton-dependent oligopeptide transporter (POT/PTR) (TC 2.A.17) family. DtpB subfamily.

The protein resides in the cell inner membrane. Functionally, proton-dependent permease that transports di- and tripeptides. This is Dipeptide and tripeptide permease B from Xenorhabdus bovienii (strain SS-2004) (Xenorhabdus nematophila subsp. bovienii).